An 853-amino-acid chain; its full sequence is DNA mismatch repair protein MutS (853 aa).

Residue 614 to 621 (GPNMGGKS) coordinates ATP.

It belongs to the DNA mismatch repair MutS family.

Its function is as follows. This protein is involved in the repair of mismatches in DNA. It is possible that it carries out the mismatch recognition step. This protein has a weak ATPase activity. This Escherichia coli O1:K1 / APEC protein is DNA mismatch repair protein MutS.